We begin with the raw amino-acid sequence, 133 residues long: uncharacterized protein (133 aa).

This sequence belongs to the ycf68 family.

Its subcellular location is the plastid. The protein resides in the chloroplast. This is an uncharacterized protein from Oryza sativa subsp. japonica (Rice).